A 105-amino-acid chain; its full sequence is Small ribosomal subunit protein bS18 (105 aa).

Positions Met1–Pro10 are enriched in polar residues. The interval Met1–Lys34 is disordered. Over residues Ser12–Gly25 the composition is skewed to low complexity.

This sequence belongs to the bacterial ribosomal protein bS18 family. As to quaternary structure, part of the 30S ribosomal subunit. Forms a tight heterodimer with protein bS6.

Binds as a heterodimer with protein bS6 to the central domain of the 16S rRNA, where it helps stabilize the platform of the 30S subunit. The protein is Small ribosomal subunit protein bS18 of Acidobacterium capsulatum (strain ATCC 51196 / DSM 11244 / BCRC 80197 / JCM 7670 / NBRC 15755 / NCIMB 13165 / 161).